Here is a 125-residue protein sequence, read N- to C-terminus: Cu-Zn superoxide dismutase-like protein (125 aa).

Residues C52 and C102 are joined by a disulfide bond.

Belongs to the Cu-Zn superoxide dismutase family.

The protein localises to the host cytoplasm. Virion protein with no enzymatic activity. The polypeptide is Cu-Zn superoxide dismutase-like protein (Mus musculus (Mouse)).